Consider the following 266-residue polypeptide: Type III pantothenate kinase (266 aa).

An ATP-binding site is contributed by 11–18; sequence DIGNTSTV. 111-114 provides a ligand contact to substrate; sequence GADR. Asp113 acts as the Proton acceptor in catalysis. Residue Asp135 coordinates K(+). Thr138 serves as a coordination point for ATP. Thr190 provides a ligand contact to substrate.

It belongs to the type III pantothenate kinase family. Homodimer. NH4(+) serves as cofactor. The cofactor is K(+).

Its subcellular location is the cytoplasm. The catalysed reaction is (R)-pantothenate + ATP = (R)-4'-phosphopantothenate + ADP + H(+). The protein operates within cofactor biosynthesis; coenzyme A biosynthesis; CoA from (R)-pantothenate: step 1/5. Catalyzes the phosphorylation of pantothenate (Pan), the first step in CoA biosynthesis. In Deinococcus geothermalis (strain DSM 11300 / CIP 105573 / AG-3a), this protein is Type III pantothenate kinase.